The following is a 130-amino-acid chain: Anti-adapter protein IraD (130 aa).

This sequence belongs to the GpW/Gp25 family. IraD subfamily. Interacts with RssB.

The protein resides in the cytoplasm. In terms of biological role, inhibits RpoS proteolysis by regulating RssB activity, thereby increasing the stability of the sigma stress factor RpoS during oxidative stress. Its effect on RpoS stability is due to its interaction with RssB, which probably blocks the interaction of RssB with RpoS, and the consequent delivery of the RssB-RpoS complex to the ClpXP protein degradation pathway. In Escherichia coli O45:K1 (strain S88 / ExPEC), this protein is Anti-adapter protein IraD.